A 220-amino-acid chain; its full sequence is Ribosomal RNA small subunit methyltransferase G (220 aa).

S-adenosyl-L-methionine contacts are provided by residues G82, L87, D105–T107, V133–E134, and R147.

It belongs to the methyltransferase superfamily. RNA methyltransferase RsmG family.

The protein resides in the cytoplasm. Specifically methylates the N7 position of a guanine in 16S rRNA. This is Ribosomal RNA small subunit methyltransferase G from Chlorobium limicola (strain DSM 245 / NBRC 103803 / 6330).